The chain runs to 435 residues: Gamma-glutamyl phosphate reductase (435 aa).

This sequence belongs to the gamma-glutamyl phosphate reductase family.

Its subcellular location is the cytoplasm. The enzyme catalyses L-glutamate 5-semialdehyde + phosphate + NADP(+) = L-glutamyl 5-phosphate + NADPH + H(+). Its pathway is amino-acid biosynthesis; L-proline biosynthesis; L-glutamate 5-semialdehyde from L-glutamate: step 2/2. In terms of biological role, catalyzes the NADPH-dependent reduction of L-glutamate 5-phosphate into L-glutamate 5-semialdehyde and phosphate. The product spontaneously undergoes cyclization to form 1-pyrroline-5-carboxylate. This is Gamma-glutamyl phosphate reductase from Bradyrhizobium diazoefficiens (strain JCM 10833 / BCRC 13528 / IAM 13628 / NBRC 14792 / USDA 110).